The chain runs to 251 residues: 4-hydroxy-tetrahydrodipicolinate reductase (251 aa).

8 to 13 (GALGRM) contacts NAD(+). NADP(+) is bound at residue Arg-36. NAD(+)-binding positions include 89-91 (GTT) and 113-116 (TTNF). His-145 acts as the Proton donor/acceptor in catalysis. His-146 is a (S)-2,3,4,5-tetrahydrodipicolinate binding site. Lys-149 (proton donor) is an active-site residue. 155–156 (GT) contributes to the (S)-2,3,4,5-tetrahydrodipicolinate binding site.

It belongs to the DapB family.

The protein localises to the cytoplasm. The enzyme catalyses (S)-2,3,4,5-tetrahydrodipicolinate + NAD(+) + H2O = (2S,4S)-4-hydroxy-2,3,4,5-tetrahydrodipicolinate + NADH + H(+). It carries out the reaction (S)-2,3,4,5-tetrahydrodipicolinate + NADP(+) + H2O = (2S,4S)-4-hydroxy-2,3,4,5-tetrahydrodipicolinate + NADPH + H(+). It functions in the pathway amino-acid biosynthesis; L-lysine biosynthesis via DAP pathway; (S)-tetrahydrodipicolinate from L-aspartate: step 4/4. In terms of biological role, catalyzes the conversion of 4-hydroxy-tetrahydrodipicolinate (HTPA) to tetrahydrodipicolinate. In Methanocorpusculum labreanum (strain ATCC 43576 / DSM 4855 / Z), this protein is 4-hydroxy-tetrahydrodipicolinate reductase.